The primary structure comprises 369 residues: sn-glycerol-3-phosphate import ATP-binding protein UgpC 1 (369 aa).

An ABC transporter domain is found at 4 to 234 (ISIRGVKKNY…PVSRFVAGFV (231 aa)). 36–43 (GPSGCGKS) serves as a coordination point for ATP.

This sequence belongs to the ABC transporter superfamily. sn-glycerol-3-phosphate importer (TC 3.A.1.1.3) family. In terms of assembly, the complex is composed of two ATP-binding proteins (UgpC), two transmembrane proteins (UgpA and UgpE) and a solute-binding protein (UgpB).

The protein resides in the cell inner membrane. It carries out the reaction sn-glycerol 3-phosphate(out) + ATP + H2O = sn-glycerol 3-phosphate(in) + ADP + phosphate + H(+). Part of the ABC transporter complex UgpBAEC involved in sn-glycerol-3-phosphate (G3P) import. Responsible for energy coupling to the transport system. In Rhizobium johnstonii (strain DSM 114642 / LMG 32736 / 3841) (Rhizobium leguminosarum bv. viciae), this protein is sn-glycerol-3-phosphate import ATP-binding protein UgpC 1.